The sequence spans 260 residues: Ubiquinone/menaquinone biosynthesis C-methyltransferase UbiE (260 aa).

Residues Thr-83, Asp-104, and 132 to 133 (NA) contribute to the S-adenosyl-L-methionine site.

It belongs to the class I-like SAM-binding methyltransferase superfamily. MenG/UbiE family.

It carries out the reaction a 2-demethylmenaquinol + S-adenosyl-L-methionine = a menaquinol + S-adenosyl-L-homocysteine + H(+). The catalysed reaction is a 2-methoxy-6-(all-trans-polyprenyl)benzene-1,4-diol + S-adenosyl-L-methionine = a 5-methoxy-2-methyl-3-(all-trans-polyprenyl)benzene-1,4-diol + S-adenosyl-L-homocysteine + H(+). The protein operates within quinol/quinone metabolism; menaquinone biosynthesis; menaquinol from 1,4-dihydroxy-2-naphthoate: step 2/2. Its pathway is cofactor biosynthesis; ubiquinone biosynthesis. Its function is as follows. Methyltransferase required for the conversion of demethylmenaquinol (DMKH2) to menaquinol (MKH2) and the conversion of 2-polyprenyl-6-methoxy-1,4-benzoquinol (DDMQH2) to 2-polyprenyl-3-methyl-6-methoxy-1,4-benzoquinol (DMQH2). This Bartonella tribocorum (strain CIP 105476 / IBS 506) protein is Ubiquinone/menaquinone biosynthesis C-methyltransferase UbiE.